The primary structure comprises 123 residues: Large ribosomal subunit protein eL8 (123 aa).

The protein belongs to the eukaryotic ribosomal protein eL8 family. In terms of assembly, part of the 50S ribosomal subunit. Probably part of the RNase P complex.

It is found in the cytoplasm. Functionally, multifunctional RNA-binding protein that recognizes the K-turn motif in ribosomal RNA, the RNA component of RNase P, box H/ACA, box C/D and box C'/D' sRNAs. The protein is Large ribosomal subunit protein eL8 of Methanopyrus kandleri (strain AV19 / DSM 6324 / JCM 9639 / NBRC 100938).